A 90-amino-acid polypeptide reads, in one-letter code: Electron transfer flavoprotein regulatory factor 1 (90 aa).

This sequence belongs to the complex I LYR family. In terms of assembly, homotetramer. Interacts with NDUFAB1. Interacts with ETFA. Interacts with ETFB.

The protein resides in the mitochondrion. Its function is as follows. Acts as a regulator of the electron transfer flavoprotein by promoting the removal of flavin from the ETF holoenzyme (composed of ETFA and ETFB). The chain is Electron transfer flavoprotein regulatory factor 1 from Homo sapiens (Human).